We begin with the raw amino-acid sequence, 51 residues long: Defensin-like protein 2A (51 aa).

Gln-1 carries the post-translational modification Pyrrolidone carboxylic acid. Cystine bridges form between Cys-4–Cys-51, Cys-15–Cys-36, Cys-21–Cys-45, and Cys-25–Cys-47. Ser-8 bears the Phosphoserine; by CPK mark.

As to quaternary structure, forms oligomers in its native state.

Possesses antifungal activity sensitive to inorganic cations. The sequence is that of Defensin-like protein 2A from Sinapis alba (White mustard).